The sequence spans 314 residues: MRIVFMGTGDIAIPAFRSLIRHSDLAGLVTQPDRPVGRHQVLTAPAIKNIAREAGIPVLQPHSLRSPDALSNLRRLNPDLIVVMAYGQILSQEVIDMAPMGCINAHASLLPRHRGAACIQSAIKSGDAETGITIMHIVRKLDAGDIIAQISTPLEGSETGGTLHDKLARMTPDVLLPVIHSIEKGTATRIRQQEILATYAPKLLRADGKIDWTRPAEEIGRMIRAYDPWPGTFTNYWNRKKRIRNMKIFPGFSILPEAEGKPGQVLSAGEQGLLIACGSGGLLVTDVQLEGSTRMNISQLIAGHPNLKDIHFDV.

Residue 108 to 111 participates in (6S)-5,6,7,8-tetrahydrofolate binding; it reads SLLP.

Belongs to the Fmt family.

It catalyses the reaction L-methionyl-tRNA(fMet) + (6R)-10-formyltetrahydrofolate = N-formyl-L-methionyl-tRNA(fMet) + (6S)-5,6,7,8-tetrahydrofolate + H(+). Attaches a formyl group to the free amino group of methionyl-tRNA(fMet). The formyl group appears to play a dual role in the initiator identity of N-formylmethionyl-tRNA by promoting its recognition by IF2 and preventing the misappropriation of this tRNA by the elongation apparatus. The chain is Methionyl-tRNA formyltransferase from Akkermansia muciniphila (strain ATCC BAA-835 / DSM 22959 / JCM 33894 / BCRC 81048 / CCUG 64013 / CIP 107961 / Muc).